Here is a 666-residue protein sequence, read N- to C-terminus: Putative cysteine-rich receptor-like protein kinase 31 (666 aa).

The N-terminal stretch at M1–A23 is a signal peptide. Gnk2-homologous domains lie at Q24–F130 and L136–Y245. Residues Q24–V280 lie on the Extracellular side of the membrane. N52, N62, N104, N127, and N151 each carry an N-linked (GlcNAc...) asparagine glycan. A helical transmembrane segment spans residues I281 to I301. Residues W302 to R666 lie on the Cytoplasmic side of the membrane. Residues F339–I616 form the Protein kinase domain. ATP is bound by residues L345 to V353 and K367. Phosphotyrosine is present on Y412. D464 acts as the Proton acceptor in catalysis. S468 carries the post-translational modification Phosphoserine. T504 bears the Phosphothreonine mark. At Y512 the chain carries Phosphotyrosine.

The protein belongs to the protein kinase superfamily. Ser/Thr protein kinase family. CRK subfamily.

The protein localises to the membrane. It carries out the reaction L-seryl-[protein] + ATP = O-phospho-L-seryl-[protein] + ADP + H(+). The enzyme catalyses L-threonyl-[protein] + ATP = O-phospho-L-threonyl-[protein] + ADP + H(+). This is Putative cysteine-rich receptor-like protein kinase 31 (CRK31) from Arabidopsis thaliana (Mouse-ear cress).